Here is a 512-residue protein sequence, read N- to C-terminus: Cytoplasmic tRNA 2-thiolation protein 2-B (512 aa).

The segment at 196-215 is disordered; sequence VTDSDSPGSSDKMYQSTCSR. Over residues 199 to 214 the composition is skewed to polar residues; that stretch reads SDSPGSSDKMYQSTCS.

This sequence belongs to the CTU2/NCS2 family.

The protein localises to the cytoplasm. It functions in the pathway tRNA modification; 5-methoxycarbonylmethyl-2-thiouridine-tRNA biosynthesis. Plays a central role in 2-thiolation of mcm(5)S(2)U at tRNA wobble positions of tRNA(Lys), tRNA(Glu) and tRNA(Gln). May act by forming a heterodimer with ctu1/atpbd3 that ligates sulfur from thiocarboxylated urm1 onto the uridine of tRNAs at wobble position. This chain is Cytoplasmic tRNA 2-thiolation protein 2-B (ctu2-b), found in Xenopus laevis (African clawed frog).